A 150-amino-acid chain; its full sequence is MNTGLPSQIQVIELLGGEVARAGYEVEDVIIHTWSQPFWITVLADGDTVLARDIIATLSHSVSALLDGLDNIVDRYFLEVSSLGMGRPFTSEKHFRRARGRKVELAAVGRIPADRSNWGDVRRHGDVGDPRRPRLCGMRDPAIEIMKAIV.

The protein belongs to the RimP family.

The protein resides in the cytoplasm. In terms of biological role, required for maturation of 30S ribosomal subunits. The polypeptide is Putative ribosome maturation factor RimP (Mycobacterium leprae (strain TN)).